Here is a 169-residue protein sequence, read N- to C-terminus: Ribosome maturation factor RimM (169 aa).

Residues 93–167 form the PRC barrel domain; that stretch reads PENSFFISDI…KISVILPKGL (75 aa).

It belongs to the RimM family. In terms of assembly, binds ribosomal protein uS19.

It is found in the cytoplasm. An accessory protein needed during the final step in the assembly of 30S ribosomal subunit, possibly for assembly of the head region. Essential for efficient processing of 16S rRNA. May be needed both before and after RbfA during the maturation of 16S rRNA. It has affinity for free ribosomal 30S subunits but not for 70S ribosomes. The polypeptide is Ribosome maturation factor RimM (Ruminiclostridium cellulolyticum (strain ATCC 35319 / DSM 5812 / JCM 6584 / H10) (Clostridium cellulolyticum)).